The primary structure comprises 327 residues: Type II methyltransferase M.HhaI (327 aa).

Residues 12 to 325 enclose the SAM-dependent MTase C5-type domain; sequence LRFIDLFAGL…YNIGSSLNFK (314 aa). C81 is a catalytic residue.

The protein belongs to the class I-like SAM-binding methyltransferase superfamily. C5-methyltransferase family. Monomer.

The catalysed reaction is a 2'-deoxycytidine in DNA + S-adenosyl-L-methionine = a 5-methyl-2'-deoxycytidine in DNA + S-adenosyl-L-homocysteine + H(+). Its function is as follows. A methylase, recognizes the double-stranded sequence 5'-GCGC-3', methylates C-2 on both strands, and protects the DNA from cleavage by the HhaI endonuclease. The polypeptide is Type II methyltransferase M.HhaI (hhaIM) (Haemophilus parahaemolyticus).